A 508-amino-acid polypeptide reads, in one-letter code: Maturase K (508 aa).

This sequence belongs to the intron maturase 2 family. MatK subfamily.

Its subcellular location is the plastid. The protein resides in the chloroplast. Functionally, usually encoded in the trnK tRNA gene intron. Probably assists in splicing its own and other chloroplast group II introns. The protein is Maturase K of Ranunculus trichophyllus (Whitewater crowfoot).